The following is a 942-amino-acid chain: MAGGGKHTPTPKAIIHQKFGAKASYTVEEVHDSSQSGCLGLAIPQKGPCLYRCHLQLPEFSVVSNVFKKKKDSEQSAAELALDKLGIRPQNDDLTVDEARDEIVGRIKYIFSDEFLSAEHPLGAHLRAALRRDGERCGSVPVSVIATVDAKINSRCKIINPSVESDPFLAISYVMKAAAKLADYIVASPHGLRRKNAYPSEIVEALATHVSDSLHSREVAAVYIPCIDEEVVELDTLYISSNRHYLDSIAERLGLKDGNQVMISRMFGKASCGSECRLYSEIPKKYLDNSSDASGTSNEDSSHIVKSRNARASYICGQDIHGDAILASVGYRWKSDDLDYDDVTVNSFYRICCGMSPNGIYKISRQAVIAAQLPFAFTTKSNWRGPLPREILGLFCHQHRLAEPILSSSTAPVKSLSDIFRSHKKLKVSGVDDANENLSRQKEDTPGLGHGFRCEVKIFTKSQDLVLECSPRKFYEKENDAIQNASLKALLWFSKFFADLDVDGEQSCDTDDDQDTKSSSPNVFAAPPILQKEHSSESKNTNVLSAEKRVQSITNGSVVSICYSLSLAVDPEYSSDGESPREDNESNEEMESEYSANCESSVELIESNEEIEFEVGTGSMNPHIESEVTQMTVGEYASFRMTPPDAAEALILAVGSDTVRIRSLLSERPCLNYNILLLGVKGPSEERMEAAFFKPPLSKQRVEYALKHIRESSASTLVDFGCGSGSLLDSLLDYPTSLQTIIGVDISPKGLARAAKMLHVKLNKEACNVKSATLYDGSILEFDSRLHDVDIGTCLEVIEHMEEDQACEFGEKVLSLFHPKLLIVSTPNYEFNTILQRSTPETQEENNSEPQLPKFRNHDHKFEWTREQFNQWASKLGKRHNYSVEFSGVGGSGEVEPGFASQIAIFRREASSVENVAESSMQPYKVIWEWKKEDVEKKKTDL.

Positions 19–87 (FGAKASYTVE…AELALDKLGI (69 aa)) constitute a DRBM domain. One can recognise an HTH La-type RNA-binding domain in the interval 93–204 (DLTVDEARDE…KNAYPSEIVE (112 aa)). Positions 505–514 (EQSCDTDDDQ) are enriched in acidic residues. 2 disordered regions span residues 505–542 (EQSC…KNTN) and 571–596 (PEYS…EYSA). Residues serine 726, aspartate 745, 778-779 (SI), and leucine 795 each bind S-adenosyl-L-methionine. Glutamate 796, glutamate 799, and histidine 800 together coordinate Mg(2+). A disordered region spans residues 837 to 856 (RSTPETQEENNSEPQLPKFR). Mg(2+) is bound at residue histidine 860.

It belongs to the methyltransferase superfamily. HEN1 family. Binds small RNA duplexes as monomer. It depends on Mg(2+) as a cofactor. As to expression, expressed in stems, leaves and inflorescences.

It localises to the nucleus. The enzyme catalyses small RNA 3'-end nucleotide + S-adenosyl-L-methionine = small RNA 3'-end 2'-O-methylnucleotide + S-adenosyl-L-homocysteine + H(+). Functionally, methyltransferase that adds a methyl group to the ribose of the last nucleotide of small RNAs (sRNAs). This protects the 3'-end of sRNAs from uridylation activity and subsequent degradation. Can methylate 3'-end of microRNAs (miRNAs), small interfering RNAs (siRNas) and trans-acting small interfering RNAs (ta-siRNAs). Involved in plant development through its role in small RNAs processing. Required for the specification of reproductive organ identities and the probable repression of A class genes. May control floral determinacy possibly by regulating the expression of the C class floral homeotic gene AGAMOUS (AG). The protein is Small RNA 2'-O-methyltransferase (HEN1) of Arabidopsis thaliana (Mouse-ear cress).